Here is a 244-residue protein sequence, read N- to C-terminus: 1-(5-phosphoribosyl)-5-[(5-phosphoribosylamino)methylideneamino] imidazole-4-carboxamide isomerase (244 aa).

Aspartate 10 functions as the Proton acceptor in the catalytic mechanism. Aspartate 129 functions as the Proton donor in the catalytic mechanism.

The protein belongs to the HisA/HisF family.

Its subcellular location is the cytoplasm. The enzyme catalyses 1-(5-phospho-beta-D-ribosyl)-5-[(5-phospho-beta-D-ribosylamino)methylideneamino]imidazole-4-carboxamide = 5-[(5-phospho-1-deoxy-D-ribulos-1-ylimino)methylamino]-1-(5-phospho-beta-D-ribosyl)imidazole-4-carboxamide. It participates in amino-acid biosynthesis; L-histidine biosynthesis; L-histidine from 5-phospho-alpha-D-ribose 1-diphosphate: step 4/9. This is 1-(5-phosphoribosyl)-5-[(5-phosphoribosylamino)methylideneamino] imidazole-4-carboxamide isomerase from Rhodococcus jostii (strain RHA1).